The primary structure comprises 471 residues: Glutamate--tRNA ligase 1 (471 aa).

The short motif at 10 to 20 (PSPTGFLHIGG) is the 'HIGH' region element. Residues 113 to 140 (ARKEGRPPRYDGRWRDRDPSEAPKDRDP) are disordered. The 'KMSKS' region signature appears at 239–243 (KLSKR). Lysine 242 contributes to the ATP binding site.

It belongs to the class-I aminoacyl-tRNA synthetase family. Glutamate--tRNA ligase type 1 subfamily. Monomer.

The protein localises to the cytoplasm. The catalysed reaction is tRNA(Glu) + L-glutamate + ATP = L-glutamyl-tRNA(Glu) + AMP + diphosphate. Functionally, catalyzes the attachment of glutamate to tRNA(Glu) in a two-step reaction: glutamate is first activated by ATP to form Glu-AMP and then transferred to the acceptor end of tRNA(Glu). The protein is Glutamate--tRNA ligase 1 of Xanthobacter autotrophicus (strain ATCC BAA-1158 / Py2).